A 373-amino-acid polypeptide reads, in one-letter code: Queuine tRNA-ribosyltransferase (373 aa).

Catalysis depends on Asp-94, which acts as the Proton acceptor. Substrate-binding positions include 94–98 (DSGGF), Asp-148, Gln-190, and Gly-217. The segment at 248–254 (GVGSPDC) is RNA binding. Residue Asp-267 is the Nucleophile of the active site. The RNA binding; important for wobble base 34 recognition stretch occupies residues 272–276 (TRIAR). Cys-305, Cys-307, Cys-310, and His-336 together coordinate Zn(2+).

This sequence belongs to the queuine tRNA-ribosyltransferase family. Homodimer. Within each dimer, one monomer is responsible for RNA recognition and catalysis, while the other monomer binds to the replacement base PreQ1. Zn(2+) serves as cofactor.

The catalysed reaction is 7-aminomethyl-7-carbaguanine + guanosine(34) in tRNA = 7-aminomethyl-7-carbaguanosine(34) in tRNA + guanine. It functions in the pathway tRNA modification; tRNA-queuosine biosynthesis. Its function is as follows. Catalyzes the base-exchange of a guanine (G) residue with the queuine precursor 7-aminomethyl-7-deazaguanine (PreQ1) at position 34 (anticodon wobble position) in tRNAs with GU(N) anticodons (tRNA-Asp, -Asn, -His and -Tyr). Catalysis occurs through a double-displacement mechanism. The nucleophile active site attacks the C1' of nucleotide 34 to detach the guanine base from the RNA, forming a covalent enzyme-RNA intermediate. The proton acceptor active site deprotonates the incoming PreQ1, allowing a nucleophilic attack on the C1' of the ribose to form the product. After dissociation, two additional enzymatic reactions on the tRNA convert PreQ1 to queuine (Q), resulting in the hypermodified nucleoside queuosine (7-(((4,5-cis-dihydroxy-2-cyclopenten-1-yl)amino)methyl)-7-deazaguanosine). The sequence is that of Queuine tRNA-ribosyltransferase from Moorella thermoacetica (strain ATCC 39073 / JCM 9320).